Reading from the N-terminus, the 402-residue chain is Dynactin subunit 2 (402 aa).

The segment at 1 to 26 is disordered; the sequence is MADPKYADLPGIARNEPDVYETSDLP. Coiled coils occupy residues 101-132 and 357-402; these read PQQR…SAAE and VHLD…KRLQ.

Belongs to the dynactin subunit 2 family. In terms of assembly, subunit of dynactin, a multiprotein complex part of a tripartite complex with dynein and a adapter, such as BICDL1, BICD2 or HOOK3. The dynactin complex is built around ACTR1A/ACTB filament and consists of an actin-related filament composed of a shoulder domain, a pointed end and a barbed end. Its length is defined by its flexible shoulder domain. The soulder is composed of 2 DCTN1 subunits, 4 DCTN2 and 2 DCTN3.

The protein resides in the cytoplasm. Its subcellular location is the cytoskeleton. It is found in the microtubule organizing center. The protein localises to the centrosome. It localises to the membrane. In terms of biological role, part of the dynactin complex that activates the molecular motor dynein for ultra-processive transport along microtubules. In the dynactin soulder domain, binds the ACTR1A filament and acts as a molecular ruler to determine the length. Modulates cytoplasmic dynein binding to an organelle, and plays a role in prometaphase chromosome alignment and spindle organization during mitosis. Involved in anchoring microtubules to centrosomes. In Gallus gallus (Chicken), this protein is Dynactin subunit 2 (DCTN2).